We begin with the raw amino-acid sequence, 343 residues long: GTP 3',8-cyclase (343 aa).

Residues 19–244 enclose the Radical SAM core domain; that stretch reads PFGRNISYLR…TDLDDSTGGP (226 aa). Arg-28 provides a ligand contact to GTP. [4Fe-4S] cluster-binding residues include Cys-35 and Cys-39. Tyr-41 contributes to the S-adenosyl-L-methionine binding site. Cys-42 contacts [4Fe-4S] cluster. Arg-77 is a GTP binding site. Gly-81 provides a ligand contact to S-adenosyl-L-methionine. A GTP-binding site is contributed by Thr-111. Position 135 (Ser-135) interacts with S-adenosyl-L-methionine. Lys-171 is a binding site for GTP. Position 205 (Met-205) interacts with S-adenosyl-L-methionine. Residues Cys-268 and Cys-271 each coordinate [4Fe-4S] cluster. 273 to 275 provides a ligand contact to GTP; that stretch reads RVR. Cys-285 contributes to the [4Fe-4S] cluster binding site.

It belongs to the radical SAM superfamily. MoaA family. In terms of assembly, monomer and homodimer. Requires [4Fe-4S] cluster as cofactor.

It carries out the reaction GTP + AH2 + S-adenosyl-L-methionine = (8S)-3',8-cyclo-7,8-dihydroguanosine 5'-triphosphate + 5'-deoxyadenosine + L-methionine + A + H(+). It participates in cofactor biosynthesis; molybdopterin biosynthesis. Its function is as follows. Catalyzes the cyclization of GTP to (8S)-3',8-cyclo-7,8-dihydroguanosine 5'-triphosphate. The sequence is that of GTP 3',8-cyclase from Nitrobacter winogradskyi (strain ATCC 25391 / DSM 10237 / CIP 104748 / NCIMB 11846 / Nb-255).